The primary structure comprises 130 residues: Small ribosomal subunit protein uS11 (130 aa).

The protein belongs to the universal ribosomal protein uS11 family. In terms of assembly, part of the 30S ribosomal subunit. Interacts with proteins S7 and S18. Binds to IF-3.

Located on the platform of the 30S subunit, it bridges several disparate RNA helices of the 16S rRNA. Forms part of the Shine-Dalgarno cleft in the 70S ribosome. The sequence is that of Small ribosomal subunit protein uS11 from Thermosynechococcus vestitus (strain NIES-2133 / IAM M-273 / BP-1).